Consider the following 711-residue polypeptide: Polyribonucleotide nucleotidyltransferase (711 aa).

Residues Asp486 and Asp492 each coordinate Mg(2+). In terms of domain architecture, KH spans 553–612 (PRIHTIKINPDKIKDVIGKGGSVIRALTEETGTTIEIEDDGTVKIAATDGDKAQHAIRRI). The 69-residue stretch at 622–690 (GRIYNGKVTR…RQGRVRLSIK (69 aa)) folds into the S1 motif domain. The disordered stretch occupies residues 689-711 (IKEATEQTPSAAAPEAPAAEQGE). Low complexity predominate over residues 694-711 (EQTPSAAAPEAPAAEQGE).

Belongs to the polyribonucleotide nucleotidyltransferase family. As to quaternary structure, component of the RNA degradosome, which is a multiprotein complex involved in RNA processing and mRNA degradation. Mg(2+) is required as a cofactor.

It localises to the cytoplasm. It carries out the reaction RNA(n+1) + phosphate = RNA(n) + a ribonucleoside 5'-diphosphate. Involved in mRNA degradation. Catalyzes the phosphorolysis of single-stranded polyribonucleotides processively in the 3'- to 5'-direction. The sequence is that of Polyribonucleotide nucleotidyltransferase from Klebsiella pneumoniae subsp. pneumoniae (strain ATCC 700721 / MGH 78578).